Here is a 216-residue protein sequence, read N- to C-terminus: UPF0193 protein EVG1 homolog (216 aa).

Belongs to the UPF0193 (EVG1) family.

This Mus musculus (Mouse) protein is UPF0193 protein EVG1 homolog.